Consider the following 163-residue polypeptide: Cytochrome c-type biogenesis protein CcmE (163 aa).

The Cytoplasmic portion of the chain corresponds to 1 to 7 (MTRKQRR). A helical; Signal-anchor for type II membrane protein membrane pass occupies residues 8–28 (LVFIGTCGAVLAVALGLVLWA). At 29–163 (MSGTIVFFRS…RTASGEARAP (135 aa)) the chain is on the periplasmic side. Histidine 122 and tyrosine 126 together coordinate heme. Positions 134–163 (ALKKSGRWQEGAGHPAPAPPRTASGEARAP) are disordered.

Belongs to the CcmE/CycJ family.

It is found in the cell inner membrane. Functionally, heme chaperone required for the biogenesis of c-type cytochromes. Transiently binds heme delivered by CcmC and transfers the heme to apo-cytochromes in a process facilitated by CcmF and CcmH. The protein is Cytochrome c-type biogenesis protein CcmE of Methylobacterium sp. (strain 4-46).